Here is a 91-residue protein sequence, read N- to C-terminus: Virion membrane protein A14 homolog (91 aa).

Over 1–12 the chain is Intravirion; sequence MDPLGFFRNRPS. The helical transmembrane segment at 13 to 33 threads the bilayer; sequence YVVVFGIILLIVACICAYIEL. The Virion surface portion of the chain corresponds to 34–46; sequence SKSGKPADSALRS. Residues 47–67 form a helical membrane-spanning segment; sequence ISIISFILAILLLLGIILFSG. At 68-91 the chain is on the intravirion side; sequence YNRYCTGNVVDESRYATSPGTEIQ.

It belongs to the chordopoxvirinae A14 family. In terms of assembly, homodimer; disulfide-linked. Interacts with A17. Phosphorylated by viral F10 kinase, phosphorylation state is regulated by H1 phosphatase.

The protein resides in the virion membrane. Envelope protein which is a major component of the mature virion (MV) membrane. Essential for membrane biogenesis. Is required, together with A17, to form bona fide crescents, which can progress to form the immature virion (IV) membrane. A14 and A17 form a lattice that is stabilized by disulfide bonds and serves as an anchor within the viral membrane to which several other proteins important in virion structure and morphogenesis attach. This is Virion membrane protein A14 homolog from Fowlpox virus (strain NVSL) (FPV).